Here is a 172-residue protein sequence, read N- to C-terminus: NADH dehydrogenase [ubiquinone] 1 alpha subcomplex subunit 8 (172 aa).

CHCH domains follow at residues 33–74 (GAQC…FRQI) and 75–118 (KRHC…LGWV). Short sequence motifs (cx9C motif) lie at residues 36 to 46 (CDKPNKEFMLC), 56 to 66 (CLEEGKLVNKC), 78 to 88 (CAEPFTEYWTC), and 100 to 110 (CRKQQAKFDEC). 4 disulfides stabilise this stretch: Cys36/Cys66, Cys46/Cys56, Cys78/Cys110, and Cys88/Cys100. The disordered stretch occupies residues 133 to 164 (TDRPLPENPYHSRPRPDPSPEIEGDLQPATHG).

It belongs to the complex I NDUFA8 subunit family. In terms of assembly, complex I is composed of 45 different subunits. Post-translationally, may contain intrachain disulfide bonds, as evidenced by its electrophoretic mobility under reducing vs non-reducing conditions.

It is found in the mitochondrion inner membrane. It localises to the mitochondrion intermembrane space. Its subcellular location is the mitochondrion. In terms of biological role, accessory subunit of the mitochondrial membrane respiratory chain NADH dehydrogenase (Complex I), that is believed not to be involved in catalysis. Complex I functions in the transfer of electrons from NADH to the respiratory chain. The immediate electron acceptor for the enzyme is believed to be ubiquinone. In Homo sapiens (Human), this protein is NADH dehydrogenase [ubiquinone] 1 alpha subcomplex subunit 8 (NDUFA8).